Consider the following 93-residue polypeptide: Large ribosomal subunit protein bL27 (93 aa).

A disordered region spans residues 1–22; it reads MAHKKAGGSSRNGRDSEGRRLG.

The protein belongs to the bacterial ribosomal protein bL27 family.

The sequence is that of Large ribosomal subunit protein bL27 from Methylobacterium sp. (strain 4-46).